Consider the following 240-residue polypeptide: MGRGKIAIKRINNSTSRQVTFSKRRNGLLKKAKELAILCDAEVGVIIFSSTGRLYDFSSSSMKSVIERYSDAKGETSSENDPASEIQFWQKEAAILKRQLHNLQENHRQMMGEELSGLSVEALQNLENQLELSLRGVRMKKDQMLIEEIQVLNREGNLVHQENLDLHKKVNLMHQQNMELHEKVSEVEGVKIANKNSLLTNGLDMRDTSNEHVHLQLSQPQHDHETHSKAIQLNYFSFIA.

Positions 1-61 (MGRGKIAIKR…GRLYDFSSSS (61 aa)) constitute an MADS-box domain. Residues 86–176 (IQFWQKEAAI…HKKVNLMHQQ (91 aa)) enclose the K-box domain.

As to quaternary structure, homodimer. Interacts with AGL15, AGL24, AP1, AGL6, AG, AGL1, AGL11, AGL5, SEP3, SEP1, AGL63, AGL14, SOC1 and AGL21. Interacts with AGL63. Interacts with SVP. In terms of tissue distribution, expressed at high levels in leaves, moderate levels in roots, seedlings and stems, and at low levels in flowers, pollen and siliques. Accumulates in leaf guard cells and trichomes. Also present in epidermal cells of roots. Expressed in mature guard cells.

It localises to the nucleus. Functionally, probable transcription factor involved in the regulation of flowering time in long-day photoperiod. Participates in the repression of FT expression and floral transition, by interacting closely with the FLC-SVP pathways. Functions in the satellite meristemoid lineage of stomatal development. The protein is Agamous-like MADS-box protein AGL16 (AGL16) of Arabidopsis thaliana (Mouse-ear cress).